A 302-amino-acid chain; its full sequence is uncharacterized protein (302 aa).

9 consecutive transmembrane segments (helical) span residues 1-21 (MSWI…LGVI), 33-53 (SLLF…YIYY), 67-87 (FLIE…IFQF), 101-121 (FGII…IILI), 124-144 (FSWL…KTFY), 185-205 (YVTP…VFAI), 220-240 (IIYT…FCLA), 253-273 (LALI…IAIP), and 274-294 (AYIS…ASVI).

This sequence belongs to the TerC family.

It is found in the cell membrane. This is an uncharacterized protein from Rickettsia bellii (strain RML369-C).